We begin with the raw amino-acid sequence, 123 residues long: Large ribosomal subunit protein bL12 (123 aa).

A disordered region spans residues 98–123 (KEGVSKEEAEEIKSKLEDAGATVELK). Over residues 100 to 115 (GVSKEEAEEIKSKLED) the composition is skewed to basic and acidic residues.

It belongs to the bacterial ribosomal protein bL12 family. In terms of assembly, homodimer. Part of the ribosomal stalk of the 50S ribosomal subunit. Forms a multimeric L10(L12)X complex, where L10 forms an elongated spine to which 2 to 4 L12 dimers bind in a sequential fashion. Binds GTP-bound translation factors.

In terms of biological role, forms part of the ribosomal stalk which helps the ribosome interact with GTP-bound translation factors. Is thus essential for accurate translation. The polypeptide is Large ribosomal subunit protein bL12 (Halothermothrix orenii (strain H 168 / OCM 544 / DSM 9562)).